Consider the following 71-residue polypeptide: Protein translocase subunit SecE (71 aa).

Residues 43–63 form a helical membrane-spanning segment; sequence VAGVGILAVGAIGFIIYVLLT.

Belongs to the SecE/SEC61-gamma family. As to quaternary structure, component of the Sec protein translocase complex. Heterotrimer consisting of SecY (alpha), SecG (beta) and SecE (gamma) subunits. The heterotrimers can form oligomers, although 1 heterotrimer is thought to be able to translocate proteins. Interacts with the ribosome. May interact with SecDF, and other proteins may be involved.

It is found in the cell membrane. Its function is as follows. Essential subunit of the Sec protein translocation channel SecYEG. Clamps together the 2 halves of SecY. May contact the channel plug during translocation. This Methanosarcina barkeri (strain Fusaro / DSM 804) protein is Protein translocase subunit SecE.